Consider the following 246-residue polypeptide: Probable transcriptional regulatory protein Teth39_1009 (246 aa).

The disordered stretch occupies residues 1-21; that stretch reads MSGHSKWANIKHKKEKMDAKK.

This sequence belongs to the TACO1 family.

It localises to the cytoplasm. The sequence is that of Probable transcriptional regulatory protein Teth39_1009 from Thermoanaerobacter pseudethanolicus (strain ATCC 33223 / 39E) (Clostridium thermohydrosulfuricum).